We begin with the raw amino-acid sequence, 373 residues long: Potential protein lysine methyltransferase SET6 (373 aa).

Residues 12-338 (PFFQVRQTKW…KDEQICIDYS (327 aa)) form the SET domain.

The protein belongs to the class V-like SAM-binding methyltransferase superfamily.

In terms of biological role, involved in resistance to compounds that target ergosterol biosynthesis, including fenpropimorph, dyclonine, and alverine citrate. Since a deletion in the absence of these compounds does not have an effect on growth, is more likely to be involved in compound availability. This Saccharomyces cerevisiae (strain ATCC 204508 / S288c) (Baker's yeast) protein is Potential protein lysine methyltransferase SET6 (SET6).